We begin with the raw amino-acid sequence, 192 residues long: Probable GTP-binding protein EngB (192 aa).

The 171-residue stretch at 22–192 (GRPEIVFVGR…LLERLDLFSQ (171 aa)) folds into the EngB-type G domain. GTP-binding positions include 30-37 (GRSNVGKS), 57-61 (GKTRL), 75-78 (DLPG), 142-145 (TKWD), and 172-174 (YSS). Mg(2+) contacts are provided by Ser-37 and Thr-59.

It belongs to the TRAFAC class TrmE-Era-EngA-EngB-Septin-like GTPase superfamily. EngB GTPase family. Requires Mg(2+) as cofactor.

Functionally, necessary for normal cell division and for the maintenance of normal septation. The polypeptide is Probable GTP-binding protein EngB (Chlorobaculum parvum (strain DSM 263 / NCIMB 8327) (Chlorobium vibrioforme subsp. thiosulfatophilum)).